The sequence spans 141 residues: Large ribosomal subunit protein uL11 (141 aa).

The protein belongs to the universal ribosomal protein uL11 family. In terms of assembly, part of the ribosomal stalk of the 50S ribosomal subunit. Interacts with L10 and the large rRNA to form the base of the stalk. L10 forms an elongated spine to which L12 dimers bind in a sequential fashion forming a multimeric L10(L12)X complex. In terms of processing, one or more lysine residues are methylated.

Its function is as follows. Forms part of the ribosomal stalk which helps the ribosome interact with GTP-bound translation factors. This Limosilactobacillus fermentum (strain NBRC 3956 / LMG 18251) (Lactobacillus fermentum) protein is Large ribosomal subunit protein uL11.